A 337-amino-acid chain; its full sequence is MANSC domain-containing protein 4 (337 aa).

A signal peptide spans 1 to 18 (MRAVELLLLLGLASMVHG). The Extracellular segment spans residues 19-278 (LCSPTVFYRD…SSENEEPWDG (260 aa)). Positions 33–113 (RFPGMLLDLE…LEPGASAILY (81 aa)) constitute an MANSC domain. N-linked (GlcNAc...) asparagine glycosylation is found at Asn-114, Asn-227, and Asn-251. Polar residues-rich tracts occupy residues 216–230 (SPST…NKTI) and 239–260 (TRVS…VNKT). Residues 216–277 (SPSTDFTHSP…HSSENEEPWD (62 aa)) form a disordered region. The chain crosses the membrane as a helical span at residues 279 to 299 (APASAGVWLACVTLGAAVISL). At 300-337 (CCRVVLGTSRCCGKRQGWSHMGQRSASGCRRNTLKENS) the chain is on the cytoplasmic side. A disordered region spans residues 314 to 337 (RQGWSHMGQRSASGCRRNTLKENS).

Its subcellular location is the membrane. In Mus musculus (Mouse), this protein is MANSC domain-containing protein 4 (Mansc4).